The primary structure comprises 370 residues: 3-isopropylmalate dehydrogenase (370 aa).

77 to 90 is a binding site for NAD(+); sequence GPKWDSVPYEVRPE. The substrate site is built by Arg-97, Arg-107, Arg-135, and Asp-226. 3 residues coordinate Mg(2+): Asp-226, Asp-250, and Asp-254. An NAD(+)-binding site is contributed by 290-302; sequence GSAPDIAGKGIAN.

This sequence belongs to the isocitrate and isopropylmalate dehydrogenases family. LeuB type 1 subfamily. In terms of assembly, homodimer. It depends on Mg(2+) as a cofactor. Mn(2+) serves as cofactor.

It localises to the cytoplasm. It catalyses the reaction (2R,3S)-3-isopropylmalate + NAD(+) = 4-methyl-2-oxopentanoate + CO2 + NADH. It functions in the pathway amino-acid biosynthesis; L-leucine biosynthesis; L-leucine from 3-methyl-2-oxobutanoate: step 3/4. Functionally, catalyzes the oxidation of 3-carboxy-2-hydroxy-4-methylpentanoate (3-isopropylmalate) to 3-carboxy-4-methyl-2-oxopentanoate. The product decarboxylates to 4-methyl-2 oxopentanoate. This chain is 3-isopropylmalate dehydrogenase, found in Brucella melitensis biotype 1 (strain ATCC 23456 / CCUG 17765 / NCTC 10094 / 16M).